The sequence spans 2151 residues: Calpain-type cysteine protease DEK1 (2151 aa).

A signal peptide spans 1 to 32 (MEGDERGVLLACVISGTLFTVFGSGSFWILWA). Residues 33–69 (VNWRPWRLYSWIFARKWPKVLQGPQLDILCGVLSLFA) lie on the Extracellular side of the membrane. The helical transmembrane segment at 70–90 (WIVVVSPIAILIGWGSWLIVI) threads the bilayer. Residues 91–94 (LDRH) are Cytoplasmic-facing. The helical transmembrane segment at 95-115 (IIGLAIIMAGTALLLAFYSIM) threads the bilayer. Residues 116-126 (LWWRTQWQSSR) lie on the Extracellular side of the membrane. A helical membrane pass occupies residues 127–147 (AVALLLLLGVALLCAYELCAV). Residues 148 to 163 (YVTAGAHASQQYSPSG) lie on the Cytoplasmic side of the membrane. A helical membrane pass occupies residues 164 to 184 (FFFGVSAIALAINMLFICRMV). At 185 to 235 (FNGNGLDVDEYVRRAYKFAYSDCIEVGPVACLPEPPDPNELYPRQTSRASH) the chain is on the extracellular side. A helical transmembrane segment spans residues 236–256 (LGLLYLGSLVVLLAYSVLYGL). The Cytoplasmic portion of the chain corresponds to 257–263 (TARESRW). The helical transmembrane segment at 264-284 (LGGITSAAVIVLDWNIGACLY) threads the bilayer. Residues 285–293 (GFKLLQNRV) are Extracellular-facing. Residues 294 to 314 (LALFVAGISRLFLICFGIHYW) traverse the membrane as a helical segment. The Cytoplasmic portion of the chain corresponds to 315 to 319 (YLGHC). Residues 320-340 (ISYIFVASVLSGAAVSRHLSI) form a helical membrane-spanning segment. Residues 341–615 (TDPSAARRDA…LLLHHVAGTP (275 aa)) are Extracellular-facing. Disordered regions lie at residues 363-393 (RRKEQNSSSSSSDGCGSSIKRSSSIDAGHTG) and 405-442 (CTADNLTRTGSSQEGINSDKSEESGRPSLGLRSSSCRS). Low complexity predominate over residues 369–388 (SSSSSSDGCGSSIKRSSSID). Positions 405-420 (CTADNLTRTGSSQEGI) are enriched in polar residues. The span at 430 to 442 (RPSLGLRSSSCRS) shows a compositional bias: low complexity. Residues 616–636 (ERAWGLFSLVFILETIIVAIF) traverse the membrane as a helical segment. Residues 637–652 (RPKTITIINSSHQQFE) lie on the Cytoplasmic side of the membrane. Residues 653–673 (FGFSVLLLSPVVCSIMAFLRS) form a helical membrane-spanning segment. At 674–686 (LQVEEMALTSKSR) the chain is on the extracellular side. Residues 687–707 (KYGFVAWLLSTSVGLSLSFLS) traverse the membrane as a helical segment. Topologically, residues 708 to 711 (KSSV) are cytoplasmic. A helical transmembrane segment spans residues 712–732 (LLGISLTVPLMAACLSIAVPI). At 733-760 (WMHNGYQFWVPQLSCGDQARDLRSPRIK) the chain is on the extracellular side. A helical transmembrane segment spans residues 761–782 (GFILWICVVLFAGSVISLGAII). The Cytoplasmic portion of the chain corresponds to 783-813 (SAKPLDDLKYKLFSARENNVTSPYTSSVYLG). A helical membrane pass occupies residues 814–834 (WAMSSGIALVVTAILPIVSWF). Topologically, residues 835-844 (ATYRFSHSSA) are extracellular. Residues 845 to 865 (VCLMIFSVVLVAFCGTSYLEV) traverse the membrane as a helical segment. Topologically, residues 866–878 (VKSRDDQLPTKGD) are cytoplasmic. A helical transmembrane segment spans residues 879 to 899 (FLAALLPLACIPALLSLCCGM). Residues 900-912 (VKWKDDCWILSRG) are Extracellular-facing. A helical membrane pass occupies residues 913–933 (VYVFFSIGLLLLFGAIAAVIA). The Cytoplasmic segment spans residues 934–936 (VKP). Residues 937–957 (WTIGVSFLLVLFLMVVTIGVI) traverse the membrane as a helical segment. Residues 958-971 (HLWASNNFYLTRKQ) are Extracellular-facing. A helical transmembrane segment spans residues 972-992 (TSFVCFLALLLGLAAFLLGWH). At 993-1006 (QDKAFAGASVGYFT) the chain is on the cytoplasmic side. A helical membrane pass occupies residues 1007–1027 (FLSLLAGRALAVLLSPPIVVY). At 1028–1050 (SPRVLPVYVYDAHADCGKNVSAA) the chain is on the extracellular side. Residues 1051–1071 (FLVLYGIALATEGWGVVASLI) form a helical membrane-spanning segment. Over 1072–2151 (IYPPFAGAAV…TKASIVLEAL (1080 aa)) the chain is Cytoplasmic. 2 consecutive Calpain catalytic domains span residues 1407 to 1600 (SGKH…DMID) and 1695 to 1997 (QFTD…CRVY). Active-site residues include cysteine 1761, histidine 1919, and asparagine 1939.

This sequence belongs to the peptidase C2 family. Post-translationally, autocatalytic proteolytic cleavage leading to the production of mainly cytoplasmic localized subproducts of about 85 and 120 kDa. Mostly expressed in meristems and organ primordia. Expressed at low levels in young and germinating seeds at 10 ppm and in seedling roots at 67 ppm. Present in most tissues at a low level.

It localises to the cell membrane. The protein localises to the endosome membrane. It is found in the endoplasmic reticulum membrane. The protein resides in the cytoplasm. In terms of biological role, essential protease involved in epiderm development. Required for aleurone cell development in the endosperm probably by maintaining and restricting the aleurone and embryonic epidermal L1 cell-layer fates as well as meristems organization. Involved in the maintenance of adaxial/abaxial axis information in developing leaves, probably by regulating cell proliferation and expansion. Does not need calcium ions to be active. Required for the formation of giant cells in sepals by determining cell fate and promoting endoreplication. The chain is Calpain-type cysteine protease DEK1 from Arabidopsis thaliana (Mouse-ear cress).